A 298-amino-acid polypeptide reads, in one-letter code: Homoserine kinase (298 aa).

92 to 102 (PLARGLGSSAT) provides a ligand contact to ATP.

This sequence belongs to the GHMP kinase family. Homoserine kinase subfamily.

The protein localises to the cytoplasm. It carries out the reaction L-homoserine + ATP = O-phospho-L-homoserine + ADP + H(+). The protein operates within amino-acid biosynthesis; L-threonine biosynthesis; L-threonine from L-aspartate: step 4/5. Functionally, catalyzes the ATP-dependent phosphorylation of L-homoserine to L-homoserine phosphate. The chain is Homoserine kinase (thrB) from Nostoc sp. (strain PCC 7120 / SAG 25.82 / UTEX 2576).